The sequence spans 282 residues: Predicted GPI-anchored protein 23 (282 aa).

A signal peptide spans 1–18 (MRVSTLVLSTSIIPIATA). A disordered region spans residues 163–264 (GQETSGAGSL…SSNSSSSAGM (102 aa)). 3 N-linked (GlcNAc...) asparagine glycosylation sites follow: asparagine 180, asparagine 192, and asparagine 257. A compositionally biased stretch (gly residues) spans 186–216 (GGSGSSNGTSSGSGSGSGAGVGSGSGSGSGS). Residues 236–264 (LGISSSISQSTTRQLQTSGSSNSSSSAGM) are compositionally biased toward low complexity. Residue serine 259 is the site of GPI-anchor amidated serine attachment. A propeptide spans 260-282 (SSAGMGNVVVGMNAVALAALVLI) (removed in mature form).

It is found in the cell membrane. Functionally, probable cell surface protein involved in the process of adhesion and early events of invasion. The sequence is that of Predicted GPI-anchored protein 23 (PGA23) from Candida albicans (strain SC5314 / ATCC MYA-2876) (Yeast).